Consider the following 500-residue polypeptide: Cytochrome P450 monooxygenase astJ (500 aa).

Residue C440 participates in heme binding.

The protein belongs to the cytochrome P450 family. Heme is required as a cofactor.

The protein operates within secondary metabolite biosynthesis; terpenoid biosynthesis. Its function is as follows. Cytochrome P450 monooxygenase; part of the gene cluster that mediates the biosynthesis of astellolides, drimane-type sesquiterpene esters that show antimicrobial, anti-inflammatory, and anti-tumor activities. The first step in astellolide biosynthesis is performed by the sesquiterpene cyclase astC that catalyzes the formation of drimanyl pyrophosphate from farnesyl pyrophosphate. Drimanyl pyrophosphate is then dephosphorylated by the sesquiterpene phosphatase astI to produce drimanyl monophosphate which is further dephosphorylated to drim-8-ene-11-ol by atsK. Drim-8-ene-11-ol is converted to confertifolin, probably by the cytochrome P450 monooxygenase astD and/or the dehydrogenase astE. The cytochrome P450 monooxygenases astB, astF and astJ then hydroxylate confertifolin at C6, C14, or C15 to form trihydroxy confertifolin. The nonribosomal peptide synthetase astA catalyzes ester bond formation between trihydroxy contifolin and benzoic acid (BA) or 4-hydroxy benzoic acid (4HBA), leading to the formation of dideacetyl astellolides A and B, respectively. Finally, the O-acetyltransferase astG converts dideacetyl astellolides A and B into deacetyl astellolides A and B. This chain is Cytochrome P450 monooxygenase astJ, found in Aspergillus oryzae (strain ATCC 42149 / RIB 40) (Yellow koji mold).